A 418-amino-acid polypeptide reads, in one-letter code: 3-isopropylmalate dehydratase large subunit (418 aa).

[4Fe-4S] cluster-binding residues include C297, C357, and C360.

Belongs to the aconitase/IPM isomerase family. LeuC type 2 subfamily. In terms of assembly, heterodimer of LeuC and LeuD. [4Fe-4S] cluster is required as a cofactor.

The catalysed reaction is (2R,3S)-3-isopropylmalate = (2S)-2-isopropylmalate. The protein operates within amino-acid biosynthesis; L-leucine biosynthesis; L-leucine from 3-methyl-2-oxobutanoate: step 2/4. In terms of biological role, catalyzes the isomerization between 2-isopropylmalate and 3-isopropylmalate, via the formation of 2-isopropylmaleate. This is 3-isopropylmalate dehydratase large subunit from Elusimicrobium minutum (strain Pei191).